The chain runs to 182 residues: Type-1 fimbrial protein, A chain (182 aa).

The N-terminal stretch at 1 to 23 (MKIKTLAIVVLSALSLSSTAALA) is a signal peptide. The cysteines at positions 44 and 84 are disulfide-linked.

It belongs to the fimbrial protein family.

It localises to the fimbrium. Functionally, fimbriae (also called pili), polar filaments radiating from the surface of the bacterium to a length of 0.5-1.5 micrometers and numbering 100-300 per cell, enable bacteria to colonize the epithelium of specific host organs. The sequence is that of Type-1 fimbrial protein, A chain (fimA) from Escherichia coli (strain K12).